Consider the following 116-residue polypeptide: Dolichyl-diphosphooligosaccharide--protein glycosyltransferase subunit DAD1 (116 aa).

Topologically, residues 1 to 32 are cytoplasmic; it reads MAKSSATKDAQALFHSLRSAYAATPTNLKIID. A helical transmembrane segment spans residues 33–53; it reads LYVIFAISTALIQVVYMAIVG. The Lumenal segment spans residues 54–56; sequence SFP. A helical membrane pass occupies residues 57 to 77; the sequence is FNSFLSGVLSCIGTAVLAVCL. Residues 78–95 are Cytoplasmic-facing; that stretch reads RIQVNKENKEFKDLPPER. A helical transmembrane segment spans residues 96-116; sequence AFADFVLCNLVLHLVIMNFLG.

This sequence belongs to the DAD/OST2 family. Component of the oligosaccharyltransferase (OST) complex.

The protein resides in the endoplasmic reticulum membrane. The protein operates within protein modification; protein glycosylation. Functionally, subunit of the oligosaccharyl transferase (OST) complex that catalyzes the initial transfer of a defined glycan (Glc(3)Man(9)GlcNAc(2) in eukaryotes) from the lipid carrier dolichol-pyrophosphate to an asparagine residue within an Asn-X-Ser/Thr consensus motif in nascent polypeptide chains, the first step in protein N-glycosylation. N-glycosylation occurs cotranslationally and the complex associates with the Sec61 complex at the channel-forming translocon complex that mediates protein translocation across the endoplasmic reticulum (ER). All subunits are required for a maximal enzyme activity. This Solanum lycopersicum (Tomato) protein is Dolichyl-diphosphooligosaccharide--protein glycosyltransferase subunit DAD1 (DAD1).